The primary structure comprises 963 residues: Ubiquitin carboxyl-terminal hydrolase 11 (963 aa).

A disordered region spans residues 64–93; that stretch reads VTEDREPQHEELPGLDSQWRQIENGESGRE. Basic and acidic residues predominate over residues 65 to 75; sequence TEDREPQHEEL. Residues 76-184 form the DUSP domain; the sequence is PGLDSQWRQI…GQPPIERKVI (109 aa). Position 245 is an N6-acetyllysine (K245). The USP domain occupies 309-930; sequence CGLTNLGNTC…AAYVLFYQRQ (622 aa). C318 acts as the Nucleophile in catalysis. Disordered stretches follow at residues 644 to 691 and 716 to 735; these read TKPN…SGVT and LFTL…TSPE. S648 is modified (phosphoserine). Over residues 649 to 665 the composition is skewed to acidic residues; it reads DDEDDGDEKEDDEEDKD. Polar residues predominate over residues 717 to 731; sequence FTLQTVNSNGTSDRT. A Phosphoserine modification is found at S733. The Proton acceptor role is filled by H888. A compositionally biased stretch (low complexity) spans 938–957; sequence SPAGSSGAPASPACSSPPSS. The disordered stretch occupies residues 938–963; that stretch reads SPAGSSGAPASPACSSPPSSEFMDVN. The residue at position 948 (S948) is a Phosphoserine.

Belongs to the peptidase C19 family. Monomer. Associated component of the Polycomb group (PcG) multiprotein PRC1-like complex. Interacts with RANBP9/RANBPM. Interacts with BRCA2. Interacts with CHUK/IKKA. Interacts with NFKBIA. Interacts with SPRY3, RAE1, MYCBP2/PAM, and KCTD6. In terms of assembly, (Microbial infection) Interacts with papilloma virus protein 16E7.

It is found in the nucleus. It localises to the cytoplasm. The protein localises to the chromosome. It carries out the reaction Thiol-dependent hydrolysis of ester, thioester, amide, peptide and isopeptide bonds formed by the C-terminal Gly of ubiquitin (a 76-residue protein attached to proteins as an intracellular targeting signal).. Functionally, protease that can remove conjugated ubiquitin from target proteins and polyubiquitin chains. Inhibits the degradation of target proteins by the proteasome. Cleaves preferentially 'Lys-6' and 'Lys-63'-linked ubiquitin chains. Has lower activity with 'Lys-11' and 'Lys-33'-linked ubiquitin chains, and extremely low activity with 'Lys-27', 'Lys-29' and 'Lys-48'-linked ubiquitin chains (in vitro). Plays a role in the regulation of pathways leading to NF-kappa-B activation. Plays a role in the regulation of DNA repair after double-stranded DNA breaks. Acts as a chromatin regulator via its association with the Polycomb group (PcG) multiprotein PRC1-like complex; may act by deubiquitinating components of the PRC1-like complex. Promotes cell proliferation by deubiquitinating phosphorylated E2F1. This Homo sapiens (Human) protein is Ubiquitin carboxyl-terminal hydrolase 11 (USP11).